We begin with the raw amino-acid sequence, 51 residues long: Glutamate dehydrogenase (51 aa).

Lys-31 provides a ligand contact to substrate.

This sequence belongs to the Glu/Leu/Phe/Val dehydrogenases family. As to quaternary structure, homohexamer.

It is found in the mitochondrion matrix. It carries out the reaction L-glutamate + NAD(+) + H2O = 2-oxoglutarate + NH4(+) + NADH + H(+). It catalyses the reaction L-glutamate + NADP(+) + H2O = 2-oxoglutarate + NH4(+) + NADPH + H(+). Its function is as follows. Mitochondrial glutamate dehydrogenase that converts L-glutamate into alpha-ketoglutarate. Plays a key role in glutamine anaplerosis by producing alpha-ketoglutarate, an important intermediate in the tricarboxylic acid cycle. This is Glutamate dehydrogenase from Electrophorus electricus (Electric eel).